Here is a 620-residue protein sequence, read N- to C-terminus: 1-deoxy-D-xylulose-5-phosphate synthase (620 aa).

Residues His75 and 116–118 each bind thiamine diphosphate; that span reads AHS. Position 147 (Asp147) interacts with Mg(2+). Thiamine diphosphate is bound by residues 148–149, Asn177, Tyr284, and Glu366; that span reads GA. Asn177 contacts Mg(2+).

It belongs to the transketolase family. DXPS subfamily. In terms of assembly, homodimer. Mg(2+) is required as a cofactor. Requires thiamine diphosphate as cofactor.

The enzyme catalyses D-glyceraldehyde 3-phosphate + pyruvate + H(+) = 1-deoxy-D-xylulose 5-phosphate + CO2. It functions in the pathway metabolic intermediate biosynthesis; 1-deoxy-D-xylulose 5-phosphate biosynthesis; 1-deoxy-D-xylulose 5-phosphate from D-glyceraldehyde 3-phosphate and pyruvate: step 1/1. Functionally, catalyzes the acyloin condensation reaction between C atoms 2 and 3 of pyruvate and glyceraldehyde 3-phosphate to yield 1-deoxy-D-xylulose-5-phosphate (DXP). This is 1-deoxy-D-xylulose-5-phosphate synthase from Bordetella avium (strain 197N).